The following is a 339-amino-acid chain: Replication factor C subunit 4 (339 aa).

49 to 56 (GPPGTGKT) contacts ATP.

It belongs to the activator 1 small subunits family. In terms of assembly, heterotetramer of subunits RFC2, RFC3, RFC4 and RFC5 that can form a complex with RFC1.

It is found in the nucleus. Functionally, may be involved in DNA replication and thus regulate cell proliferation. The polypeptide is Replication factor C subunit 4 (RFC4) (Arabidopsis thaliana (Mouse-ear cress)).